A 338-amino-acid chain; its full sequence is tRNA-specific 2-thiouridylase MnmA (338 aa).

ATP contacts are provided by residues 6–13 (AMSGGVDS) and Met-32. The active-site Nucleophile is Cys-92. A disulfide bond links Cys-92 and Cys-186. Gly-116 lines the ATP pocket. The segment at 134-136 (KDQ) is interaction with tRNA. Residue Cys-186 is the Cysteine persulfide intermediate of the active site. The segment at 288–289 (RY) is interaction with tRNA.

This sequence belongs to the MnmA/TRMU family.

Its subcellular location is the cytoplasm. The enzyme catalyses S-sulfanyl-L-cysteinyl-[protein] + uridine(34) in tRNA + AH2 + ATP = 2-thiouridine(34) in tRNA + L-cysteinyl-[protein] + A + AMP + diphosphate + H(+). Its function is as follows. Catalyzes the 2-thiolation of uridine at the wobble position (U34) of tRNA, leading to the formation of s(2)U34. The protein is tRNA-specific 2-thiouridylase MnmA of Campylobacter jejuni subsp. jejuni serotype O:2 (strain ATCC 700819 / NCTC 11168).